A 120-amino-acid polypeptide reads, in one-letter code: Large ribosomal subunit protein uL18 (120 aa).

The protein belongs to the universal ribosomal protein uL18 family. In terms of assembly, part of the 50S ribosomal subunit; part of the 5S rRNA/L5/L18/L25 subcomplex. Contacts the 5S and 23S rRNAs.

Its function is as follows. This is one of the proteins that bind and probably mediate the attachment of the 5S RNA into the large ribosomal subunit, where it forms part of the central protuberance. The chain is Large ribosomal subunit protein uL18 from Paramagnetospirillum magneticum (strain ATCC 700264 / AMB-1) (Magnetospirillum magneticum).